The chain runs to 254 residues: Gamma-glutamyl-gamma-aminobutyrate hydrolase (254 aa).

The region spanning 16–250 is the Glutamine amidotransferase type-1 domain; it reads RNRLKGHATQ…ITAWQHHIAE (235 aa). Residue C114 is the Nucleophile of the active site. Catalysis depends on residues H222 and E224.

It belongs to the peptidase C26 family.

It carries out the reaction 4-(gamma-L-glutamylamino)butanoate + H2O = 4-aminobutanoate + L-glutamate. The protein operates within amine and polyamine degradation; putrescine degradation; 4-aminobutanoate from putrescine: step 4/4. Its function is as follows. Involved in the breakdown of putrescine via hydrolysis of the gamma-glutamyl linkage of gamma-glutamyl-gamma-aminobutyrate. The protein is Gamma-glutamyl-gamma-aminobutyrate hydrolase (puuD) of Shigella flexneri.